Reading from the N-terminus, the 376-residue chain is Alcohol dehydrogenase class-3 (376 aa).

Position 1 is an N-acetylserine (Ser1). Residues Cys47, His69, Cys99, Cys102, Cys105, Cys113, and Cys176 each contribute to the Zn(2+) site.

This sequence belongs to the zinc-containing alcohol dehydrogenase family. Class-III subfamily. Homodimer. Zn(2+) is required as a cofactor. Liver and gut.

Its subcellular location is the cytoplasm. The enzyme catalyses a primary alcohol + NAD(+) = an aldehyde + NADH + H(+). The catalysed reaction is a secondary alcohol + NAD(+) = a ketone + NADH + H(+). It catalyses the reaction S-(hydroxymethyl)glutathione + NADP(+) = S-formylglutathione + NADPH + H(+). It carries out the reaction S-(hydroxymethyl)glutathione + NAD(+) = S-formylglutathione + NADH + H(+). The enzyme catalyses S-nitrosoglutathione + NADH + H(+) = S-(hydroxysulfenamide)glutathione + NAD(+). In terms of biological role, class-III ADH is remarkably ineffective in oxidizing ethanol, but it readily catalyzes the oxidation of long-chain primary alcohols and the oxidation of S-(hydroxymethyl) glutathione. Also acts as a S-nitroso-glutathione reductase by catalyzing the NADH-dependent reduction of S-nitrosoglutathione, thereby regulating protein S-nitrosylation. In Myxine glutinosa (Atlantic hagfish), this protein is Alcohol dehydrogenase class-3.